A 329-amino-acid chain; its full sequence is Malate dehydrogenase (329 aa).

12–18 (GAAGQIG) provides a ligand contact to NAD(+). Substrate-binding residues include arginine 93 and arginine 99. Residues asparagine 106, glutamine 113, and 130-132 (VGN) each bind NAD(+). 2 residues coordinate substrate: asparagine 132 and arginine 163. The active-site Proton acceptor is the histidine 188.

It belongs to the LDH/MDH superfamily. MDH type 2 family.

The catalysed reaction is (S)-malate + NAD(+) = oxaloacetate + NADH + H(+). Catalyzes the reversible oxidation of malate to oxaloacetate. This Streptomyces griseus subsp. griseus (strain JCM 4626 / CBS 651.72 / NBRC 13350 / KCC S-0626 / ISP 5235) protein is Malate dehydrogenase.